The chain runs to 309 residues: Tagatose-6-phosphate kinase (309 aa).

The protein belongs to the carbohydrate kinase PfkB family. LacC subfamily.

The catalysed reaction is D-tagatofuranose 6-phosphate + ATP = D-tagatofuranose 1,6-bisphosphate + ADP + H(+). Its pathway is carbohydrate metabolism; D-tagatose 6-phosphate degradation; D-glyceraldehyde 3-phosphate and glycerone phosphate from D-tagatose 6-phosphate: step 1/2. The chain is Tagatose-6-phosphate kinase from Streptococcus pneumoniae serotype 19F (strain G54).